We begin with the raw amino-acid sequence, 177 residues long: Dual-action ribosomal maturation protein DarP (177 aa).

The tract at residues 1–26 (MKIVGDSEHFKQPYDSDEEYVSKTED) is disordered.

It belongs to the DarP family.

Its subcellular location is the cytoplasm. Functionally, member of a network of 50S ribosomal subunit biogenesis factors which assembles along the 30S-50S interface, preventing incorrect 23S rRNA structures from forming. Promotes peptidyl transferase center (PTC) maturation. In Shewanella sp. (strain ANA-3), this protein is Dual-action ribosomal maturation protein DarP.